Here is a 380-residue protein sequence, read N- to C-terminus: Cytochrome b (380 aa).

A run of 4 helical transmembrane segments spans residues 34 to 54 (FGSLLGICLATQILTGLLLAA), 78 to 99 (WLIRNLHANGASFFFICIYLHI), 114 to 134 (WNTGIILLLTLMATAFVGYVL), and 179 to 199 (FFTLHFLLPFMIAGLTLIHLT). Residues His-84 and His-98 each coordinate heme b. The heme b site is built by His-183 and His-197. His-202 is a binding site for a ubiquinone. 4 consecutive transmembrane segments (helical) span residues 227–247 (TKDILGFILLLLPLTTLALFS), 289–309 (LGGVLALAASVLILFLIPLLH), 321–341 (LSQLLFWTLVANLTILTWIGS), and 348–368 (FIIIGQLASLTYFTILLILFP).

The protein belongs to the cytochrome b family. The cytochrome bc1 complex contains 11 subunits: 3 respiratory subunits (MT-CYB, CYC1 and UQCRFS1), 2 core proteins (UQCRC1 and UQCRC2) and 6 low-molecular weight proteins (UQCRH/QCR6, UQCRB/QCR7, UQCRQ/QCR8, UQCR10/QCR9, UQCR11/QCR10 and a cleavage product of UQCRFS1). This cytochrome bc1 complex then forms a dimer. Requires heme b as cofactor.

It is found in the mitochondrion inner membrane. In terms of biological role, component of the ubiquinol-cytochrome c reductase complex (complex III or cytochrome b-c1 complex) that is part of the mitochondrial respiratory chain. The b-c1 complex mediates electron transfer from ubiquinol to cytochrome c. Contributes to the generation of a proton gradient across the mitochondrial membrane that is then used for ATP synthesis. This is Cytochrome b (MT-CYB) from Eudyptes chrysocome (Western rockhopper penguin).